We begin with the raw amino-acid sequence, 179 residues long: Large ribosomal subunit protein uL6 (179 aa).

Belongs to the universal ribosomal protein uL6 family. In terms of assembly, part of the 50S ribosomal subunit.

This protein binds to the 23S rRNA, and is important in its secondary structure. It is located near the subunit interface in the base of the L7/L12 stalk, and near the tRNA binding site of the peptidyltransferase center. In Legionella pneumophila (strain Paris), this protein is Large ribosomal subunit protein uL6.